Here is a 160-residue protein sequence, read N- to C-terminus: SsrA-binding protein (160 aa).

The disordered stretch occupies residues 136–160 (KRDTVRERDSNRELQRAVRNKGKED).

This sequence belongs to the SmpB family.

Its subcellular location is the cytoplasm. Required for rescue of stalled ribosomes mediated by trans-translation. Binds to transfer-messenger RNA (tmRNA), required for stable association of tmRNA with ribosomes. tmRNA and SmpB together mimic tRNA shape, replacing the anticodon stem-loop with SmpB. tmRNA is encoded by the ssrA gene; the 2 termini fold to resemble tRNA(Ala) and it encodes a 'tag peptide', a short internal open reading frame. During trans-translation Ala-aminoacylated tmRNA acts like a tRNA, entering the A-site of stalled ribosomes, displacing the stalled mRNA. The ribosome then switches to translate the ORF on the tmRNA; the nascent peptide is terminated with the 'tag peptide' encoded by the tmRNA and targeted for degradation. The ribosome is freed to recommence translation, which seems to be the essential function of trans-translation. The chain is SsrA-binding protein from Pseudomonas putida (strain W619).